The following is a 167-amino-acid chain: Peptide deformylase (167 aa).

Fe cation contacts are provided by cysteine 91 and histidine 133. Glutamate 134 is an active-site residue. Residue histidine 137 coordinates Fe cation.

Belongs to the polypeptide deformylase family. The cofactor is Fe(2+).

It carries out the reaction N-terminal N-formyl-L-methionyl-[peptide] + H2O = N-terminal L-methionyl-[peptide] + formate. Removes the formyl group from the N-terminal Met of newly synthesized proteins. Requires at least a dipeptide for an efficient rate of reaction. N-terminal L-methionine is a prerequisite for activity but the enzyme has broad specificity at other positions. The polypeptide is Peptide deformylase (Buchnera aphidicola subsp. Schizaphis graminum (strain Sg)).